The chain runs to 614 residues: Serine/threonine-protein kinase Pkn1 (614 aa).

Positions Tyr13–Leu276 constitute a Protein kinase domain. ATP contacts are provided by residues Leu19 to Asp27 and Lys42.

Belongs to the protein kinase superfamily. Ser/Thr protein kinase family. As to quaternary structure, interacts with PknD, interacts with and phosphorylates IncG. Autophosphorylates on serine and threonine residues. Present in elementary bodies 40 hours post-infection as 2 proteins of approximately 70 and 65 kDa; the smaller one may be due to differential phosphorylation or degradation.

The enzyme catalyses L-seryl-[protein] + ATP = O-phospho-L-seryl-[protein] + ADP + H(+). The catalysed reaction is L-threonyl-[protein] + ATP = O-phospho-L-threonyl-[protein] + ADP + H(+). In terms of biological role, together with the serine/threonine kinase PknD, may play a role in specific interactions with host proteins during host intracellular growth. Autophosphorylates and phosphorylates IncG, an inclusion-membrane protein required for the modification of the nascent chlamydial inclusion. This chain is Serine/threonine-protein kinase Pkn1 (pkn1), found in Chlamydia trachomatis serovar L2 (strain ATCC VR-902B / DSM 19102 / 434/Bu).